The primary structure comprises 215 residues: Ras-related protein Rab-5A (215 aa).

The GTP site is built by Ser29, Ala30, Gly32, Lys33, Ser34, Ser35, His46, Glu47, Thr52, and Gly78. Ser34 is a Mg(2+) binding site. Short sequence motifs (switch) lie at residues 44–56 and 77–93; these read QFHE…IGAA and AGQE…YRGA. Thr52 provides a ligand contact to Mg(2+). The residue at position 84 (Ser84) is a Phosphoserine; by LRRK2. (Microbial infection) N-beta-linked (GlcNAc) arginine glycosylation is present at Arg120. GTP-binding residues include Asn133, Lys134, Asp136, Ala164, and Lys165. A disordered region spans residues 181 to 215; that stretch reads LPKNEPQNPGANSARGRGVDLTEPTQPTRNQCCSN. Residues 203-215 show a composition bias toward polar residues; sequence EPTQPTRNQCCSN. Residues Cys212 and Cys213 are each lipidated (S-geranylgeranyl cysteine).

Belongs to the small GTPase superfamily. Rab family. In terms of assembly, interacts with SGSM1 and SGSM3. Interacts with PIK3CB. Interacts with GDI1; this promotes dissociation from membranes; phosphorylation at Ser-84 disrupts this interaction. Interacts with GDI2; phosphorylation at Ser-84 disrupts the interaction. Interacts with EEA1. Interacts with RIN1 and GAPVD1, which regulate its pathway, probably by acting as a GEF. Interacts with RINL. Interacts with ALS2CL, SUN2, ZFYVE20 and RUFY1. Interacts with RABEP1; one RABEP1 homodimer binds two RAB5A chains, but at opposite sides of the dimer. Interacts with OCRL. Interacts with INPP5F. May be a component of a complex composed of RAB5A, DYN2 and PIK3C3. Does not interact with BLOC-3 complex (heterodimer of HPS1 and HPS4). Interacts with CLN5. Interacts with APPL2. Interacts with F8A1/F8A2/F8A3. Found in a complex with F8A1/F8A2/F8A3, HTT and RAB5A; mediates the recruitment of HTT by RAB5A onto early endosomes. Interacts with ATP9A. Interacts with PPP1R21; mediates the recruitment of FERRY complex by RAB5A onto early endosomes. It depends on Mg(2+) as a cofactor. Phosphorylation of Ser-84 in the switch II region by LRRK2 prevents the association of RAB regulatory proteins, including RAB GDP dissociation inhibitors GDI1 and GDI2. Post-translationally, (Microbial infection) Glycosylated on arginine residues by S.typhimurium protein Ssek3.

It localises to the cell membrane. The protein localises to the early endosome membrane. The protein resides in the melanosome. Its subcellular location is the cytoplasmic vesicle. It is found in the cell projection. It localises to the ruffle. The protein localises to the membrane. The protein resides in the cytoplasm. Its subcellular location is the cytosol. It is found in the phagosome membrane. It localises to the endosome membrane. It carries out the reaction GTP + H2O = GDP + phosphate + H(+). Regulated by guanine nucleotide exchange factors (GEFs) including RINL, which promote the exchange of bound GDP for free GTP. Regulated by GTPase activating proteins (GAPs) which increase the GTP hydrolysis activity. Inhibited by GDP dissociation inhibitors (GDIs). In terms of biological role, the small GTPases Rab are key regulators of intracellular membrane trafficking, from the formation of transport vesicles to their fusion with membranes. Rabs cycle between an inactive GDP-bound form and an active GTP-bound form that is able to recruit to membranes different sets of downstream effectors directly responsible for vesicle formation, movement, tethering and fusion. RAB5A is required for the fusion of plasma membranes and early endosomes. Contributes to the regulation of filopodia extension. Required for the exosomal release of SDCBP, CD63, PDCD6IP and syndecan. Regulates maturation of apoptotic cell-containing phagosomes, probably downstream of DYN2 and PIK3C3. In Homo sapiens (Human), this protein is Ras-related protein Rab-5A.